The following is a 460-amino-acid chain: Beta-1,3-xylanase TXYA (460 aa).

The signal sequence occupies residues 1–22; it reads MKKLAKMISVATLGACAFQAHA. The region spanning 23-337 is the GH26 domain; the sequence is LDGKLVPDQG…LSDPKFIRHS (315 aa). The active-site Proton donor is the Glu138. Residue Glu234 is the Nucleophile of the active site. The disordered stretch occupies residues 347–371; the sequence is GNSDGGNGGDNGGDNGGDNGGETPE. Residues 348–366 are compositionally biased toward gly residues; sequence NSDGGNGGDNGGDNGGDNG. The carbohydrate binding module (CBM) stretch occupies residues 368–460; the sequence is ETPENCTDDF…TVTFTNQVCN (93 aa). 2 disulfide bridges follow: Cys373–Cys459 and Cys404–Cys409.

This sequence belongs to the glycosyl hydrolase 26 family.

The catalysed reaction is Random hydrolysis of (1-&gt;3)-beta-D-glycosidic linkages in (1-&gt;3)-beta-D-xylans.. Its activity is regulated as follows. Completely inhibited by Cu(2+), Hg(2+) and N-bromosuccinimide. Strongly inhibited by Ag(+), Zn(2+) and Pb(2+). Moderately inhibited by Fe(3+), Al(3+), Mn(2+), dithiothreitol and p-chloromercuribenzoic acid. Slightly activated by Mg(2+) and Ca(2+). Unaffected by Na(+), K(+), Ba(2+), EDTA, iodoacetic acid and N-ethylmalaimide. Functionally, catalyzes the hydrolysis of beta-1,3-xylan into oligosaccharides, mainly xylotriose and xylobiose with smaller amounts of xylotetraose, xylose, xylopentaose and xylohexaose. Weakly active toward beta-1,3-xylotriose, yielding xylose and xylobiose. Converts beta-1,3-xylotetraose into xylotriose, xylobiose and xylose. Converts beta-1,3-xylopentaose into xylotetraose, xylotriose, xylobiose and xylose. Does not hydrolyze xylobiose, p-nitrophenyl-beta-xyloside, beta-1,4-xylan, curdlan or carboxymethylcellulose. This Vibrio sp protein is Beta-1,3-xylanase TXYA.